We begin with the raw amino-acid sequence, 634 residues long: DNA-directed RNA polymerase subunit gamma (634 aa).

Cys74, Cys76, Cys89, and Cys92 together coordinate Zn(2+). Residues Asp471, Asp473, and Asp475 each contribute to the Mg(2+) site.

This sequence belongs to the RNA polymerase beta' chain family. RpoC1 subfamily. As to quaternary structure, in cyanobacteria the RNAP catalytic core is composed of 2 alpha, 1 beta, 1 beta', 1 gamma and 1 omega subunit. When a sigma factor is associated with the core the holoenzyme is formed, which can initiate transcription. Mg(2+) is required as a cofactor. It depends on Zn(2+) as a cofactor.

It catalyses the reaction RNA(n) + a ribonucleoside 5'-triphosphate = RNA(n+1) + diphosphate. Its function is as follows. DNA-dependent RNA polymerase catalyzes the transcription of DNA into RNA using the four ribonucleoside triphosphates as substrates. The sequence is that of DNA-directed RNA polymerase subunit gamma from Prochlorococcus marinus (strain MIT 9215).